The sequence spans 178 residues: Large ribosomal subunit protein uL5 (178 aa).

The protein belongs to the universal ribosomal protein uL5 family. As to quaternary structure, part of the 50S ribosomal subunit; part of the 5S rRNA/L5/L18/L25 subcomplex. Contacts the 5S rRNA and the P site tRNA. Forms a bridge to the 30S subunit in the 70S ribosome.

Its function is as follows. This is one of the proteins that bind and probably mediate the attachment of the 5S RNA into the large ribosomal subunit, where it forms part of the central protuberance. In the 70S ribosome it contacts protein S13 of the 30S subunit (bridge B1b), connecting the 2 subunits; this bridge is implicated in subunit movement. Contacts the P site tRNA; the 5S rRNA and some of its associated proteins might help stabilize positioning of ribosome-bound tRNAs. This is Large ribosomal subunit protein uL5 from Psychrobacter arcticus (strain DSM 17307 / VKM B-2377 / 273-4).